Here is an 86-residue protein sequence, read N- to C-terminus: Late effector protein 1 (86 aa).

An N-terminal signal peptide occupies residues 1–24; it reads MRSHQMAAFFAVSLMMMVVLGALS.

The protein belongs to the lep1 family. In terms of assembly, interacts at the cell wall with secreted rep1 repellent peptides.

Its subcellular location is the secreted. The protein resides in the cell wall. Its function is as follows. Core effector contributing to spore formation and tumor formation at the host plant. Modulates surface hydrophobicity promoting cell-cell or cell-surface contacts. Lep1 and rep1 interact in aerial hyphae to form a strong hydrophobic layer. Plays a crucial role in hyphal aggregation that might be a prerequisite for strong proliferation of diploid cells and for induction of the morphological changes associated with spore formation. This chain is Late effector protein 1, found in Mycosarcoma maydis (Corn smut fungus).